The chain runs to 524 residues: Probable plastidic glucose transporter 1 (524 aa).

Transmembrane regions (helical) follow at residues 88–108, 122–142, 151–171, 179–199, 208–228, 239–259, 320–340, 357–377, 386–406, 420–440, 452–472, and 483–503; these read MANF…VSIA, LVVS…GPLV, FQIF…AHSL, FLVG…ISEV, LGTL…LLGI, TMLY…QFAV, VAFI…NGVL, QASL…SYLI, LIGS…AVGF, GTLM…GLII, IMGF…LFFL, and VYAS…LFTV.

Belongs to the major facilitator superfamily. Sugar transporter (TC 2.A.1.1) family.

It is found in the plastid. Its subcellular location is the chloroplast membrane. Functionally, may be involved in the efflux of glucose towards the cytosol. The polypeptide is Probable plastidic glucose transporter 1 (Arabidopsis thaliana (Mouse-ear cress)).